A 658-amino-acid chain; its full sequence is Aspartate--tRNA ligase, mitochondrial (658 aa).

L-aspartate is bound at residue Glu-198. The segment at Gln-226–Lys-229 is aspartate. L-aspartate is bound at residue Arg-248. ATP contacts are provided by residues Arg-248 to Glu-250 and Glu-553. Arg-560 is an L-aspartate binding site. Gly-604–Arg-607 contributes to the ATP binding site.

The protein belongs to the class-II aminoacyl-tRNA synthetase family. Type 1 subfamily.

The protein localises to the mitochondrion matrix. The catalysed reaction is tRNA(Asp) + L-aspartate + ATP = L-aspartyl-tRNA(Asp) + AMP + diphosphate. Functionally, catalyzes the attachment of aspartate to tRNA(Asp) in the mitochondrion. This chain is Aspartate--tRNA ligase, mitochondrial (MSD1), found in Saccharomyces cerevisiae (strain ATCC 204508 / S288c) (Baker's yeast).